The primary structure comprises 1407 residues: Adenylate cyclase, aggregation specific (1407 aa).

The Cytoplasmic portion of the chain corresponds to 1–219; it reads MASSSPMFND…KGYLHQHYNS (219 aa). The interval 28-131 is disordered; the sequence is NELHDGNGGG…SNSVANGGHL (104 aa). Polar residues predominate over residues 51-63; the sequence is LNKSQNQPYTQYN. A compositionally biased stretch (gly residues) spans 64–75; the sequence is NGGGGGGGGGGH. Composition is skewed to low complexity over residues 80 to 90 and 98 to 115; these read HLNLNSITNNH and PNTL…NNHS. 6 consecutive transmembrane segments (helical) span residues 220-240, 244-264, 276-296, 304-324, 325-345, and 353-373; these read QIML…YGFT, IFML…SIFL, LFHP…LLEY, ILFL…LLFI, WMVM…FLES, and ISFV…LYVL. The Cytoplasmic segment spans residues 374 to 962; that stretch reads EKFRKESFIA…KYVIINNVVE (589 aa). The Guanylate cyclase 1 domain occupies 438-661; it reads SILCFDIVQF…DTIARSHTLE (224 aa). Mg(2+) is bound by residues aspartate 443, isoleucine 444, and aspartate 488. Disordered regions lie at residues 502–590, 751–799, and 828–876; these read AKKQ…EEIE, KSNN…VLGE, and NDIV…EEDF. 3 stretches are compositionally biased toward low complexity: residues 505-526, 535-581, and 752-795; these read QMPN…VNNI, NNNN…NNSG, and SNNN…SSSS. Residues 828–846 show a composition bias toward polar residues; it reads NDIVSPSLTSNSPILDTTV. Residues 847–871 show a composition bias toward low complexity; the sequence is NNNNNNNNTNNNNKNQNNIYGNNNN. Transmembrane regions (helical) follow at residues 963–979, 992–1012, 1018–1038, 1071–1091, and 1105–1125; these read TKFF…MFYL, SNVI…LSFT, PLVY…CTVL, LSVL…SILI, and IGFV…KLAM. The Guanylate cyclase 2 domain maps to 1189–1311; that stretch reads SIMFIQIAGF…DTANTASRMQ (123 aa). Residues 1378 to 1398 form a helical membrane-spanning segment; sequence ATPAGIASPLSGTLLGEIGSF. Topologically, residues 1399–1407 are cytoplasmic; that stretch reads TTPRFHLSS.

Belongs to the adenylyl cyclase class-4/guanylyl cyclase family. The cofactor is Mg(2+). Expressed throughout the structure in the tipped mound and finger. Expressed primarily in the prestalk region of the slug. In the early culminant expression is increased in the posterior prespore and anterior-most regions and expands into the developing stalk. In the mid and late culminant it is expressed throughout the stalk.

It is found in the membrane. The protein localises to the cell projection. Its subcellular location is the uropodium. It catalyses the reaction ATP = 3',5'-cyclic AMP + diphosphate. With respect to regulation, regulated by cyclic AMP receptor 1 through a guanine nucleotide binding protein and protein CRAC. Both positively and negatively regulated by extracellular cAMP; this regulation is part of the mechanism that establishes the oscillatory cAMP waves during aggregation. Coordinates cell aggregation by synthesizing the cAMP that influences differentiation and morphogenesis of cells within a developing multicellular structure. The protein is Adenylate cyclase, aggregation specific (acaA) of Dictyostelium discoideum (Social amoeba).